A 213-amino-acid chain; its full sequence is Adenylate kinase (213 aa).

An ATP-binding site is contributed by 10-15; sequence GSGKGS. The segment at 30–60 is NMP; the sequence is STGNLFRAILKEDSELARKIKEINVSGGKLV. Residues threonine 31, arginine 36, 58-60, 87-90, and glutamine 94 each bind AMP; these read KLV and GYPR. The interval 123-160 is LID; sequence GRWMCPKCAGIYNIHFKKPQVHGLCDNDQATLYQRADD. Position 124 (arginine 124) interacts with ATP. Zn(2+) contacts are provided by cysteine 127 and cysteine 130. 133-134 provides a ligand contact to ATP; the sequence is IY. Zn(2+) contacts are provided by cysteine 147 and aspartate 150. The AMP site is built by arginine 157 and arginine 168. Glutamine 196 serves as a coordination point for ATP.

Belongs to the adenylate kinase family. As to quaternary structure, monomer.

It localises to the cytoplasm. It catalyses the reaction AMP + ATP = 2 ADP. It functions in the pathway purine metabolism; AMP biosynthesis via salvage pathway; AMP from ADP: step 1/1. In terms of biological role, catalyzes the reversible transfer of the terminal phosphate group between ATP and AMP. Plays an important role in cellular energy homeostasis and in adenine nucleotide metabolism. The protein is Adenylate kinase of Ureaplasma parvum serovar 3 (strain ATCC 27815 / 27 / NCTC 11736).